The primary structure comprises 426 residues: Immunoglobulin mu Fc receptor (426 aa).

Positions 1–16 are cleaved as a signal peptide; that stretch reads MNLWLWLLYFLPVSGT. The 98-residue stretch at 24-121 folds into the Ig-like domain; the sequence is RLEVELGGSV…GKTQKVTLNV (98 aa). Intrachain disulfides connect Cys37–Cys103 and Cys49–Cys58. Position 91 is a phosphothreonine (Thr91). The interval 178-212 is disordered; sequence KTEAPPVHQPSTNTSVSRHPRVYGASSETPTKPSA. A helical membrane pass occupies residues 267–287; it reads FHILIPTFLGFLLLVLLGLVV. Disordered regions lie at residues 306–346 and 401–426; these read RRMR…REPD and DSNDYINIPGLPHLPSKPPGPRPSRQ. The segment covering 415 to 426 has biased composition (pro residues); that stretch reads PSKPPGPRPSRQ.

As to quaternary structure, interacts (via Ig-like domain) with IGHM (via CH4/Cmu4 domain), both secreted and membrane-bound IgM; the interaction is glycan-independent and multivalent theoretically involving up to eight binding sites for the IgM pentamer. Post-translationally, phosphorylated on both Tyr and Ser residues. In terms of processing, O-glycosylated. Sialylated. O-linked glycans regulate trafficking to the plasma membrane.

Its subcellular location is the cell membrane. It localises to the early endosome membrane. The protein resides in the golgi apparatus. It is found in the trans-Golgi network membrane. The protein localises to the lysosome membrane. Its function is as follows. High-affinity Fc receptor for immunoglobulin M (IgM), both secreted and membrane-bound IgM. Primarily regulates IgM transport and homeostasis. In lymphoid cells, enables exocytosis of membrane-bound IgM on the plasma membrane as well as endocytosis of IgM-antigen complexes toward lysosomes for degradation. In mucosal epithelium, mediates retrotranscytosis of antigen-IgM complexes across mucosal M cells toward antigen-presenting cells in mucosal lymphoid tissues. Triggers costimulatory signaling and mediates most of IgM effector functions involved in B cell development and primary immune response to infection. Likely limits tonic IgM BCR signaling to self-antigens for proper negative selection of autoreactive B cells in the bone marrow and for the maintenance of regulatory B cell pool in peripheral lymphoid organs. Mediates antibody responses to T cell-dependent and T cell-independent antigens and promotes induction of an efficient neutralizing IgG response. Engages in cross-talk with antigen-receptor signaling via the non-canonical NF-kappa-B, MAP kinases and calcium signaling pathways. The chain is Immunoglobulin mu Fc receptor from Rattus norvegicus (Rat).